The primary structure comprises 157 residues: Crossover junction endodeoxyribonuclease RuvC (157 aa).

Active-site residues include D7, E66, and D139. Mg(2+) is bound by residues D7, E66, and D139.

The protein belongs to the RuvC family. Homodimer which binds Holliday junction (HJ) DNA. The HJ becomes 2-fold symmetrical on binding to RuvC with unstacked arms; it has a different conformation from HJ DNA in complex with RuvA. In the full resolvosome a probable DNA-RuvA(4)-RuvB(12)-RuvC(2) complex forms which resolves the HJ. The cofactor is Mg(2+).

It is found in the cytoplasm. The catalysed reaction is Endonucleolytic cleavage at a junction such as a reciprocal single-stranded crossover between two homologous DNA duplexes (Holliday junction).. The RuvA-RuvB-RuvC complex processes Holliday junction (HJ) DNA during genetic recombination and DNA repair. Endonuclease that resolves HJ intermediates. Cleaves cruciform DNA by making single-stranded nicks across the HJ at symmetrical positions within the homologous arms, yielding a 5'-phosphate and a 3'-hydroxyl group; requires a central core of homology in the junction. The consensus cleavage sequence is 5'-(A/T)TT(C/G)-3'. Cleavage occurs on the 3'-side of the TT dinucleotide at the point of strand exchange. HJ branch migration catalyzed by RuvA-RuvB allows RuvC to scan DNA until it finds its consensus sequence, where it cleaves and resolves the cruciform DNA. The sequence is that of Crossover junction endodeoxyribonuclease RuvC from Campylobacter curvus (strain 525.92).